We begin with the raw amino-acid sequence, 452 residues long: Gamma-aminobutyric acid receptor subunit delta (452 aa).

An N-terminal signal peptide occupies residues 1–24 (MDAPARLLAPLLLLCAQQLRGTRA). The Extracellular segment spans residues 25 to 251 (MNDIGDYVGS…HLRRNRGVYI (227 aa)). Residues N103 and N106 are each glycosylated (N-linked (GlcNAc...) asparagine). An intrachain disulfide couples C164 to C178. Residues 252–271 (IQSYMPSVLLVAMSWVSFWI) traverse the membrane as a helical segment. Topologically, residues 272-275 (SQAA) are cytoplasmic. The chain crosses the membrane as a helical span at residues 276-298 (VPARVSLGITTVLTMTTLMVSAR). The Extracellular portion of the chain corresponds to 299–308 (SSLPRASAIK). Residues 309-331 (ALDVYFWICYVFVFAALVEYAFA) form a helical membrane-spanning segment. The Cytoplasmic segment spans residues 332-426 (HFNADYRKKQ…ARLRPIDADT (95 aa)). At S390 the chain carries Phosphoserine. Residues 427 to 449 (IDIYARAVFPAAFAAVNVIYWAA) traverse the membrane as a helical segment. The Extracellular portion of the chain corresponds to 450-452 (YAM).

The protein belongs to the ligand-gated ion channel (TC 1.A.9) family. Gamma-aminobutyric acid receptor (TC 1.A.9.5) subfamily. GABRD sub-subfamily. In terms of assembly, heteropentamer, formed by a combination of alpha (GABRA1-6), beta (GABRB1-3), gamma (GABRG1-3), delta (GABRD), epsilon (GABRE), rho (GABRR1-3), pi (GABRP) and theta (GABRQ) chains, each subunit exhibiting distinct physiological and pharmacological properties.

The protein localises to the cell membrane. The enzyme catalyses chloride(in) = chloride(out). Delta subunit of the heteropentameric ligand-gated chloride channel gated by gamma-aminobutyric acid (GABA), a major inhibitory neurotransmitter in the brain. GABA-gated chloride channels, also named GABA(A) receptors (GABAAR), consist of five subunits arranged around a central pore and contain GABA active binding site(s) located at the alpha and beta subunit interface(s). When activated by GABA, GABAARs selectively allow the flow of chloride anions across the cell membrane down their electrochemical gradient. GABAARs containing delta/GABRD subunits are predominantly located in extrasynaptic or perisynaptic positions on hippocampus and cerebellar granule cells, and contribute to the tonic GABAergic inhibition. GABAAR containing alpha-4-beta-3-delta subunits can simultaneously bind GABA and histamine where histamine binds at the interface of two neighboring beta subunits, which may be involved in the regulation of sleep and wakefulness. This chain is Gamma-aminobutyric acid receptor subunit delta, found in Homo sapiens (Human).